Consider the following 447-residue polypeptide: Argininosuccinate synthase (447 aa).

ATP-binding positions include 17-25 (AFSGGLDTS) and A43. Y99 serves as a coordination point for L-citrulline. ATP is bound by residues G129 and T131. Positions 131, 135, and 136 each coordinate L-aspartate. N135 contacts L-citrulline. Residue D136 coordinates ATP. L-citrulline-binding residues include R139 and S192. Residue D194 participates in ATP binding. T201, E203, and E280 together coordinate L-citrulline.

This sequence belongs to the argininosuccinate synthase family. Type 2 subfamily. As to quaternary structure, homotetramer.

It is found in the cytoplasm. The enzyme catalyses L-citrulline + L-aspartate + ATP = 2-(N(omega)-L-arginino)succinate + AMP + diphosphate + H(+). It participates in amino-acid biosynthesis; L-arginine biosynthesis; L-arginine from L-ornithine and carbamoyl phosphate: step 2/3. The sequence is that of Argininosuccinate synthase from Klebsiella pneumoniae (strain 342).